Reading from the N-terminus, the 122-residue chain is Large ribosomal subunit protein uL14c (122 aa).

The protein belongs to the universal ribosomal protein uL14 family. Part of the 50S ribosomal subunit.

The protein resides in the plastid. Its subcellular location is the chloroplast. Functionally, binds to 23S rRNA. In Phalaenopsis aphrodite subsp. formosana (Moth orchid), this protein is Large ribosomal subunit protein uL14c.